The following is a 269-amino-acid chain: Undecaprenyl-diphosphatase (269 aa).

8 helical membrane passes run 4 to 24, 50 to 70, 86 to 106, 113 to 133, 146 to 166, 186 to 206, 220 to 240, and 246 to 266; these read IELWTAVLAGVVQGITEWLPI, LWLHAGTLLAVLLRFGVPYWL, LFAIVATVCTAVVGLPVYKVL, ATGDAVQMAIGGALIVTGLLL, VNVVDAVIVGLGQGFSVIPGI, AVWLSFYLAGPAMLGATALEL, WMVTAIGVSFVVSLICMEVLL, and LDFSKVCLLLGGIALLVPLAA.

It belongs to the UppP family.

It localises to the cell membrane. It catalyses the reaction di-trans,octa-cis-undecaprenyl diphosphate + H2O = di-trans,octa-cis-undecaprenyl phosphate + phosphate + H(+). Functionally, catalyzes the dephosphorylation of undecaprenyl diphosphate (UPP). The sequence is that of Undecaprenyl-diphosphatase from Methanopyrus kandleri (strain AV19 / DSM 6324 / JCM 9639 / NBRC 100938).